The primary structure comprises 240 residues: MADS-box protein SVP (240 aa).

The region spanning 3-57 is the MADS-box domain; it reads REKIQIRKIDNATARQVTFSKRRRGLFKKAEELSVLCDADVALIIFSSTGKLFEF. In terms of domain architecture, K-box spans 87 to 180; it reads QLVENSDHAR…GTQLTEENER (94 aa). Positions 202-240 are disordered; sequence VYEEGQSSESITNAGNSTGAPVDSESSDTSLRLGLPYGG. Over residues 206-220 the composition is skewed to polar residues; the sequence is GQSSESITNAGNSTG.

As to quaternary structure, forms a heterodimer with AP1 and SVP. Interacts with the SEU-LUG corepressor complex when complexed to AP1. Interacts with AGL15. Interacts with AGL16. Detected in roots and leaves. Expressed at very low levels in flowers and siliques. Present in floral meristems.

The protein localises to the nucleus. Transcription repressor that inhibit floral transition in the autonomous flowering pathway, independent of photoperiod and temperature. Acts in a dosage-dependent manner. Together with AGL24 and AP1, controls the identity of the floral meristem and regulates expression of class B, C and E genes. Promotes EFM expression to suppress flowering. In Arabidopsis thaliana (Mouse-ear cress), this protein is MADS-box protein SVP.